The chain runs to 407 residues: Imidazolonepropionase (407 aa).

His-74 and His-76 together coordinate Fe(3+). His-74 and His-76 together coordinate Zn(2+). Positions 83, 146, and 179 each coordinate 4-imidazolone-5-propanoate. Tyr-146 is an N-formimidoyl-L-glutamate binding site. His-244 is a binding site for Fe(3+). His-244 serves as a coordination point for Zn(2+). Gln-247 is a 4-imidazolone-5-propanoate binding site. Residue Asp-319 coordinates Fe(3+). Asp-319 serves as a coordination point for Zn(2+). Residues Asn-321 and Gly-323 each coordinate N-formimidoyl-L-glutamate. Thr-324 provides a ligand contact to 4-imidazolone-5-propanoate.

Belongs to the metallo-dependent hydrolases superfamily. HutI family. The cofactor is Zn(2+). Fe(3+) is required as a cofactor.

Its subcellular location is the cytoplasm. The catalysed reaction is 4-imidazolone-5-propanoate + H2O = N-formimidoyl-L-glutamate. It participates in amino-acid degradation; L-histidine degradation into L-glutamate; N-formimidoyl-L-glutamate from L-histidine: step 3/3. Catalyzes the hydrolytic cleavage of the carbon-nitrogen bond in imidazolone-5-propanoate to yield N-formimidoyl-L-glutamate. It is the third step in the universal histidine degradation pathway. In Salmonella paratyphi A (strain ATCC 9150 / SARB42), this protein is Imidazolonepropionase.